Here is a 673-residue protein sequence, read N- to C-terminus: Pesticin receptor (673 aa).

The signal sequence occupies residues 1 to 22 (MKMTRLYPLALGGLLLPAIANA). A TonB box motif is present at residues 30–37 (STLEVTAS). Positions 41 to 155 (SRSASANNVS…QGGIINIVTQ (115 aa)) constitute a TBDR plug domain. The TBDR beta-barrel domain occupies 160-672 (TPRGYIEGGV…TVGINTRIDF (513 aa)). The TonB C-terminal box signature appears at 657-673 (QVNMGRTVGINTRIDFF).

The protein belongs to the TonB-dependent receptor family.

The protein resides in the cell outer membrane. Receptor for the bacteriocin pesticin and for the siderophore yersiniabactin. The polypeptide is Pesticin receptor (fyuA) (Yersinia enterocolitica).